Consider the following 479-residue polypeptide: Bifunctional AAC/APH (479 aa).

An N-acetyltransferase domain is found at Ile8–Asp180. The tract at residues Lys110–Phe153 is acetyl-CoA binding site. Asp374 (proton acceptor; for phosphotransferase activity) is an active-site residue. Asp393 is a binding site for a gentamycin.

It in the C-terminal section; belongs to the aminoglycoside phosphotransferase family.

It localises to the cytoplasm. It carries out the reaction a gentamycin + GTP = a gentamycin 2''-phosphate + GDP + H(+). In terms of biological role, involved in resistance to gentamicin, tobramycin, and kanamycin. Tobramycin and kanamycin resistance is due to the ACC activity, specified by N-terminal region. The C-terminal region is a kinase that phosphorylates several 4,6-disubstituted aminoglycosides. In Enterococcus faecalis (strain ATCC 700802 / V583), this protein is Bifunctional AAC/APH (aacA-aphD).